The sequence spans 240 residues: MQDPNEDTEWNEILRNFGILPPKEEPKDEIEEMVLRLQQEAMVKPYEKMTLAQLKEAEDEFDEEDIKAIEIYREKRLQEWKALKKKQKFGELREISGNQYVNEVTNAEKDLWVVIHLYRSSVPMCLVVNQHLSVLARKFPETKFVKAIVNSCIEHYHDNCLPTIFVYKNGQIEGKFIGIIECGGINLKLEELEWKLSEVGAIQSDLEENPKKGIADMMVSSIRNISIYDSDSSGSDTEAK.

A Phosducin domain is found at 38-201; it reads QQEAMVKPYE…LEWKLSEVGA (164 aa). Positions 89–240 are thioredoxin fold; that stretch reads FGELREISGN…DSSGSDTEAK (152 aa).

It belongs to the phosducin family. As to quaternary structure, interacts with the CCT chaperonin complex and actin. Testis-specific (at protein level).

Its subcellular location is the endoplasmic reticulum. Essential for male fertility, spermiogenesis and acrosome formation. The polypeptide is Phosducin-like protein 2 (Pdcl2) (Mus musculus (Mouse)).